The following is a 178-amino-acid chain: Bifunctional protein PyrR (178 aa).

Residues 99 to 111 (VIIVDDVLYTCRT) carry the PRPP-binding motif.

This sequence belongs to the purine/pyrimidine phosphoribosyltransferase family. PyrR subfamily. In terms of assembly, homodimer and homohexamer; in equilibrium.

The enzyme catalyses UMP + diphosphate = 5-phospho-alpha-D-ribose 1-diphosphate + uracil. In terms of biological role, regulates transcriptional attenuation of the pyrimidine nucleotide (pyr) operon by binding in a uridine-dependent manner to specific sites on pyr mRNA. This disrupts an antiterminator hairpin in the RNA and favors formation of a downstream transcription terminator, leading to a reduced expression of downstream genes. Its function is as follows. Also displays a weak uracil phosphoribosyltransferase activity which is not physiologically significant. This Clostridium perfringens (strain ATCC 13124 / DSM 756 / JCM 1290 / NCIMB 6125 / NCTC 8237 / Type A) protein is Bifunctional protein PyrR.